Consider the following 603-residue polypeptide: Aspartate--tRNA(Asp/Asn) ligase (603 aa).

The tract at residues 205–208 (QLFK) is aspartate. An L-aspartate-binding site is contributed by Arg227. ATP contacts are provided by residues 227 to 229 (RDE) and Gln236. Residue His463 participates in L-aspartate binding. Residue Glu497 participates in ATP binding. An L-aspartate-binding site is contributed by Arg504. 549–552 (GMDR) contacts ATP.

Belongs to the class-II aminoacyl-tRNA synthetase family. Type 1 subfamily. In terms of assembly, homodimer.

It is found in the cytoplasm. It catalyses the reaction tRNA(Asx) + L-aspartate + ATP = L-aspartyl-tRNA(Asx) + AMP + diphosphate. Aspartyl-tRNA synthetase with relaxed tRNA specificity since it is able to aspartylate not only its cognate tRNA(Asp) but also tRNA(Asn). Reaction proceeds in two steps: L-aspartate is first activated by ATP to form Asp-AMP and then transferred to the acceptor end of tRNA(Asp/Asn). The protein is Aspartate--tRNA(Asp/Asn) ligase of Anaeromyxobacter dehalogenans (strain 2CP-1 / ATCC BAA-258).